Consider the following 340-residue polypeptide: HTH-type transcriptional regulator PtxS (340 aa).

An HTH lacI-type domain is found at 12–67 (VTINQVAEAAGVSKASVSRYIGGDRQLLADATARRIERAIDQLDYRPNQMARGLKR). Positions 14–33 (INQVAEAAGVSKASVSRYIG) form a DNA-binding region, H-T-H motif.

As to quaternary structure, interacts with PtxR in the absence of 2-ketogluconate. Binding of the 2-ketogluconate effector to PtxS causes PtxS/PtxR complex dissociation.

With respect to regulation, 2-ketogluconate acts as a molecular effector and causes dissociation of the PtxS/PtxR complex. In terms of biological role, negatively regulates glucose metabolism by binding directly to the promoter region of the kgu and gad operons. It also negatively regulates its own synthesis. Functionally, in addition, in pathogenic strains, PtxS modulates PtxR activity in response to 2-ketogluconate. In the presence of PtxR, which also binds to the kgu and gad promoter regions, PtxS and PtxR form a tight complex, creating a DNA-loop that prevents RNA polymerase promoter access and expression of the glucose metabolism genes. Binding of the 2-ketogluconate effector to PtxS causes PtxS/PtxR complex dissociation and leads to the dissolution of the repression DNA-loop, facilitating the entry of the RNA polymerase and enabling the transcription of the genes. Also plays an important role in the regulation of the expression of the virulence factor exotoxin A (toxA). PtxS does not bind directly to the toxA promoter but negatively regulates the production of exotoxin A by binding to PtxR and interfering with its positive regulator activity. In the presence of 2-ketogluconate, PtxS is released and PtxR can recruit RNA polymerase. The protein is HTH-type transcriptional regulator PtxS of Pseudomonas aeruginosa (strain ATCC 15692 / DSM 22644 / CIP 104116 / JCM 14847 / LMG 12228 / 1C / PRS 101 / PAO1).